The chain runs to 311 residues: Aldose reductase B (311 aa).

Residue 13-23 (DIHHIPMIGLG) coordinates NADP(+). Tyr-54 functions as the Proton donor in the catalytic mechanism. His-116 is a substrate binding site. Residue 219 to 273 (SPLGQGKCDLLSNETLKSIADKHNKTVANVIFKWLNQRGIVTIPKSSNPARIIEN) coordinates NADP(+).

It belongs to the aldo/keto reductase family.

The enzyme catalyses an alditol + NAD(+) = an aldose + NADH + H(+). It carries out the reaction an alditol + NADP(+) = an aldose + NADPH + H(+). In terms of biological role, catalyzes the NADPH-dependent reduction of a wide variety of carbonyl-containing compounds to their corresponding alcohols with a broad range of catalytic efficiencies. The sequence is that of Aldose reductase B (alrB) from Dictyostelium discoideum (Social amoeba).